We begin with the raw amino-acid sequence, 522 residues long: Acetylcholine receptor subunit delta (522 aa).

The first 21 residues, 1 to 21 (MGNIHFVYLLISCLYYSGCSG), serve as a signal peptide directing secretion. Over 22–245 (VNEEERLIND…VTFYLIIRRK (224 aa)) the chain is Extracellular. N-linked (GlcNAc...) asparagine glycans are attached at residues asparagine 91, asparagine 164, and asparagine 229. Cysteine 151 and cysteine 165 form a disulfide bridge. Transmembrane regions (helical) follow at residues 246-270 (PLFYVINFITPCVLISFLASLAFYL), 278-295 (MSTAISVLLAQAVFLLLT), and 312-333 (YLMFIMSLVTGVIVNCGIVLNF). Residues 334–476 (HFRTPSTHVL…WNLVGQTIDR (143 aa)) lie on the Cytoplasmic side of the membrane. Tyrosine 393 carries the phosphotyrosine; by Tyr-kinases modification. Residues 477–497 (LSMFIITPVMVLGTIFIFVMG) traverse the membrane as a helical segment.

This sequence belongs to the ligand-gated ion channel (TC 1.A.9) family. Acetylcholine receptor (TC 1.A.9.1) subfamily. In terms of assembly, pentamer of two alpha chains, and one each of the beta, delta, and gamma chains.

It is found in the postsynaptic cell membrane. The protein localises to the cell membrane. The enzyme catalyses K(+)(in) = K(+)(out). It carries out the reaction Na(+)(in) = Na(+)(out). Its function is as follows. After binding acetylcholine, the AChR responds by an extensive change in conformation that affects all subunits and leads to opening of an ion-conducting channel across the plasma membrane. The polypeptide is Acetylcholine receptor subunit delta (chrnd) (Tetronarce californica (Pacific electric ray)).